Consider the following 347-residue polypeptide: NADH-ubiquinone oxidoreductase chain 2 (347 aa).

Helical transmembrane passes span 3–23, 25–45, 59–79, 96–116, 122–144, 149–171, 178–198, 202–222, 247–267, 276–296, and 326–346; these read PLIF…VMMS, HWLM…PLLM, YFLT…INLL, IIMT…FWVP, ISLS…VLYV, INLD…GGLN, ILAY…VFNP, LLNL…FMVA, IMLS…WMII, ITLA…YMRL, and LPVL…ITLL.

The protein belongs to the complex I subunit 2 family. Core subunit of respiratory chain NADH dehydrogenase (Complex I) which is composed of 45 different subunits. Interacts with TMEM242.

The protein localises to the mitochondrion inner membrane. The catalysed reaction is a ubiquinone + NADH + 5 H(+)(in) = a ubiquinol + NAD(+) + 4 H(+)(out). In terms of biological role, core subunit of the mitochondrial membrane respiratory chain NADH dehydrogenase (Complex I) which catalyzes electron transfer from NADH through the respiratory chain, using ubiquinone as an electron acceptor. Essential for the catalytic activity and assembly of complex I. The sequence is that of NADH-ubiquinone oxidoreductase chain 2 from Saccopteryx bilineata (Greater white-lined bat).